A 262-amino-acid polypeptide reads, in one-letter code: Cytochrome c oxidase subunit 3 (262 aa).

7 consecutive transmembrane segments (helical) span residues 11 to 31, 32 to 52, 83 to 103, 125 to 147, 160 to 180, 198 to 218, and 240 to 260; these read LVEPSPWPLVGGSAAFTLTVG, LVMWFHYNSISLMILGLVMIV, GMVLFIVSEVFFFLAFFWAFF, LNAFAVPLLNTAVLLSSGVTVTW, AIQSLAITVMLGLYFTGLQAW, FFVATGFHGLHVIIGSTFLMV, and AWYWHFVDVVWLFLYVCIYWW.

Belongs to the cytochrome c oxidase subunit 3 family. As to quaternary structure, component of the cytochrome c oxidase (complex IV, CIV), a multisubunit enzyme composed of a catalytic core of 3 subunits and several supernumerary subunits. The complex exists as a monomer or a dimer and forms supercomplexes (SCs) in the inner mitochondrial membrane with ubiquinol-cytochrome c oxidoreductase (cytochrome b-c1 complex, complex III, CIII).

The protein resides in the mitochondrion inner membrane. It catalyses the reaction 4 Fe(II)-[cytochrome c] + O2 + 8 H(+)(in) = 4 Fe(III)-[cytochrome c] + 2 H2O + 4 H(+)(out). In terms of biological role, component of the cytochrome c oxidase, the last enzyme in the mitochondrial electron transport chain which drives oxidative phosphorylation. The respiratory chain contains 3 multisubunit complexes succinate dehydrogenase (complex II, CII), ubiquinol-cytochrome c oxidoreductase (cytochrome b-c1 complex, complex III, CIII) and cytochrome c oxidase (complex IV, CIV), that cooperate to transfer electrons derived from NADH and succinate to molecular oxygen, creating an electrochemical gradient over the inner membrane that drives transmembrane transport and the ATP synthase. Cytochrome c oxidase is the component of the respiratory chain that catalyzes the reduction of oxygen to water. Electrons originating from reduced cytochrome c in the intermembrane space (IMS) are transferred via the dinuclear copper A center (CU(A)) of subunit 2 and heme A of subunit 1 to the active site in subunit 1, a binuclear center (BNC) formed by heme A3 and copper B (CU(B)). The BNC reduces molecular oxygen to 2 water molecules using 4 electrons from cytochrome c in the IMS and 4 protons from the mitochondrial matrix. The polypeptide is Cytochrome c oxidase subunit 3 (COIII) (Branchiostoma floridae (Florida lancelet)).